A 420-amino-acid polypeptide reads, in one-letter code: MNKAIASKILITLGFLFLYRVLAYIPIPGVDLAAIKAFFDSNSNNALGLFNMFSGNAVSRLSIISLGIMPYITSSIIMELLSATFPNLAKMKKERDGMQKYMQIVRYLTILITLIQAVSVSVGLRSISGGANGAIMIDMQVFMIVSAFSMLTGTMLLMWIGEQITQRGVGNGISLIIFAGIVSGIPSAISGTFNLVNTGVINILMLIGIVLIVLATIFAIIYVELAERRIPISYARKVVMQNQNKRIMNYIPIKLNLSGVIPPIFASALLVFPSTILQQATSNKTLQAIADFLSPQGYAYNILMFLLIIFFAYFYSSIVFNSKDIADNLRRNGGYIPGLRPGEGTSSFLNAVASKLTLWGSLYLALISTVPWILVKAMGVPFYFGGTAVLIVVQVAIDTMKKIEAQIYMSKYKTLSAVGF.

10 helical membrane-spanning segments follow: residues 9–29 (ILIT…PIPG), 61–81 (LSII…MELL), 104–124 (IVRY…SVGL), 141–161 (VFMI…MWIG), 173–193 (ISLI…SGTF), 203–223 (ILML…IIYV), 257–277 (LSGV…STIL), 300–320 (YNIL…SIVF), 355–375 (KLTL…WILV), and 377–397 (AMGV…QVAI).

It belongs to the SecY/SEC61-alpha family. As to quaternary structure, component of the Sec protein translocase complex. Heterotrimer consisting of SecY, SecE and SecG subunits. The heterotrimers can form oligomers, although 1 heterotrimer is thought to be able to translocate proteins. Interacts with the ribosome. Interacts with SecDF, and other proteins may be involved. Interacts with SecA.

The protein resides in the cell inner membrane. The central subunit of the protein translocation channel SecYEG. Consists of two halves formed by TMs 1-5 and 6-10. These two domains form a lateral gate at the front which open onto the bilayer between TMs 2 and 7, and are clamped together by SecE at the back. The channel is closed by both a pore ring composed of hydrophobic SecY resides and a short helix (helix 2A) on the extracellular side of the membrane which forms a plug. The plug probably moves laterally to allow the channel to open. The ring and the pore may move independently. In Helicobacter pylori (strain J99 / ATCC 700824) (Campylobacter pylori J99), this protein is Protein translocase subunit SecY.